The following is a 270-amino-acid chain: Transcription factor PU.1 (270 aa).

Residues 124 to 162 (LSPAQPSSDEEEGERQSPPLEVSDGEADGLEPGPGLLHG) form a disordered region. Phosphoserine is present on residues Ser-140 and Ser-146. A compositionally biased stretch (low complexity) spans 153–162 (LEPGPGLLHG). The segment at residues 170–253 (IRLYQFLLDL…VKKKLTYQFS (84 aa)) is a DNA-binding region (ETS). Lys-217, Arg-230, Arg-233, and Lys-243 together coordinate DNA.

Belongs to the ETS family. Binds DNA as a monomer. Can form homomers. Directly interacts with CEBPD/NF-IL6-beta; this interaction does not affect DNA-binding properties of each partner. Interacts with NONO/p54(nrb). Interacts with RUNX1/AML1. Interacts with GFI1; the interaction represses SPI1 transcriptional activity, hence blocks SPI1-induced macrophage differentiation of myeloid progenitor cells. Interacts with CEBPE. Interacts with IRF4/Pip and IRF8. Interacts with JUN. Interacts with RB1. Interacts with TBP.

It localises to the nucleus. Its activity is regulated as follows. Transcriptional activity at macrophage-specific genes is inhibited by interaction with GFI1, which results in the inhibition of SPI1-induced macrophage differentiation of myeloid progenitor cells, but not that of the granulocyte lineage. In terms of biological role, pioneer transcription factor, which controls hematopoietic cell fate by decompacting stem cell heterochromatin and allowing other transcription factors to enter otherwise inaccessible genomic sites. Once in open chromatin, can directly control gene expression by binding genetic regulatory elements and can also more broadly influence transcription by recruiting transcription factors, such as interferon regulatory factors (IRFs), to otherwise inaccessible genomic regions. Transcriptionally activates genes important for myeloid and lymphoid lineages, such as CSF1R. Transcriptional activation from certain promoters, possibly containing low affinity binding sites, is achieved cooperatively with other transcription factors. FCER1A transactivation is achieved in cooperation with GATA1. May be particularly important for the pro- to pre-B cell transition. Binds (via the ETS domain) onto the purine-rich DNA core sequence 5'-GAGGAA-3', also known as the PU-box. In vitro can bind RNA and interfere with pre-mRNA splicing. This Sus scrofa (Pig) protein is Transcription factor PU.1 (SPI1).